We begin with the raw amino-acid sequence, 1020 residues long: Valine--tRNA ligase (1020 aa).

The short motif at 45–55 (PNVTGALHVGH) is the 'HIGH' region element. The short motif at 661–665 (KMSKT) is the 'KMSKS' region element. Position 664 (lysine 664) interacts with ATP. Residues 955-1020 (AEKDRLEKAK…EALARLAELG (66 aa)) are a coiled coil.

The protein belongs to the class-I aminoacyl-tRNA synthetase family. ValS type 1 subfamily. In terms of assembly, monomer.

Its subcellular location is the cytoplasm. It catalyses the reaction tRNA(Val) + L-valine + ATP = L-valyl-tRNA(Val) + AMP + diphosphate. In terms of biological role, catalyzes the attachment of valine to tRNA(Val). As ValRS can inadvertently accommodate and process structurally similar amino acids such as threonine, to avoid such errors, it has a 'posttransfer' editing activity that hydrolyzes mischarged Thr-tRNA(Val) in a tRNA-dependent manner. The sequence is that of Valine--tRNA ligase from Ruegeria pomeroyi (strain ATCC 700808 / DSM 15171 / DSS-3) (Silicibacter pomeroyi).